The chain runs to 262 residues: Zinc import ATP-binding protein ZnuC (262 aa).

The region spanning 5-220 (VSLEQLCVEF…PSYIALFGNA (216 aa)) is the ABC transporter domain. 37-44 (GPNGAGKS) lines the ATP pocket. The interval 236–262 (HHDLSGSPVSGDATSCSNHNHGHHHHD) is disordered.

The protein belongs to the ABC transporter superfamily. Zinc importer (TC 3.A.1.15.5) family. The complex is composed of two ATP-binding proteins (ZnuC), two transmembrane proteins (ZnuB) and a solute-binding protein (ZnuA).

The protein resides in the cell inner membrane. It catalyses the reaction Zn(2+)(out) + ATP(in) + H2O(in) = Zn(2+)(in) + ADP(in) + phosphate(in) + H(+)(in). Functionally, part of the ABC transporter complex ZnuABC involved in zinc import. Responsible for energy coupling to the transport system. This Vibrio parahaemolyticus serotype O3:K6 (strain RIMD 2210633) protein is Zinc import ATP-binding protein ZnuC.